A 282-amino-acid chain; its full sequence is Lipoyl synthase (282 aa).

[4Fe-4S] cluster is bound by residues C37, C42, C48, C63, C67, C70, and S274. The 215-residue stretch at 49 to 263 folds into the Radical SAM core domain; sequence WGKGTATFMI…KTIGLEKGFS (215 aa).

Belongs to the radical SAM superfamily. Lipoyl synthase family. Requires [4Fe-4S] cluster as cofactor.

It localises to the cytoplasm. The catalysed reaction is [[Fe-S] cluster scaffold protein carrying a second [4Fe-4S](2+) cluster] + N(6)-octanoyl-L-lysyl-[protein] + 2 oxidized [2Fe-2S]-[ferredoxin] + 2 S-adenosyl-L-methionine + 4 H(+) = [[Fe-S] cluster scaffold protein] + N(6)-[(R)-dihydrolipoyl]-L-lysyl-[protein] + 4 Fe(3+) + 2 hydrogen sulfide + 2 5'-deoxyadenosine + 2 L-methionine + 2 reduced [2Fe-2S]-[ferredoxin]. Its pathway is protein modification; protein lipoylation via endogenous pathway; protein N(6)-(lipoyl)lysine from octanoyl-[acyl-carrier-protein]: step 2/2. Catalyzes the radical-mediated insertion of two sulfur atoms into the C-6 and C-8 positions of the octanoyl moiety bound to the lipoyl domains of lipoate-dependent enzymes, thereby converting the octanoylated domains into lipoylated derivatives. This Bacteroides thetaiotaomicron (strain ATCC 29148 / DSM 2079 / JCM 5827 / CCUG 10774 / NCTC 10582 / VPI-5482 / E50) protein is Lipoyl synthase.